A 129-amino-acid chain; its full sequence is Small ribosomal subunit protein uS11 (129 aa).

This sequence belongs to the universal ribosomal protein uS11 family. As to quaternary structure, part of the 30S ribosomal subunit. Interacts with proteins S7 and S18. Binds to IF-3.

Its function is as follows. Located on the platform of the 30S subunit, it bridges several disparate RNA helices of the 16S rRNA. Forms part of the Shine-Dalgarno cleft in the 70S ribosome. The polypeptide is Small ribosomal subunit protein uS11 (Parabacteroides distasonis (strain ATCC 8503 / DSM 20701 / CIP 104284 / JCM 5825 / NCTC 11152)).